Consider the following 874-residue polypeptide: Alanine--tRNA ligase (874 aa).

Zn(2+) contacts are provided by His564, His568, Cys665, and His669.

Belongs to the class-II aminoacyl-tRNA synthetase family. Zn(2+) is required as a cofactor.

It is found in the cytoplasm. It catalyses the reaction tRNA(Ala) + L-alanine + ATP = L-alanyl-tRNA(Ala) + AMP + diphosphate. Functionally, catalyzes the attachment of alanine to tRNA(Ala) in a two-step reaction: alanine is first activated by ATP to form Ala-AMP and then transferred to the acceptor end of tRNA(Ala). Also edits incorrectly charged Ser-tRNA(Ala) and Gly-tRNA(Ala) via its editing domain. This chain is Alanine--tRNA ligase, found in Delftia acidovorans (strain DSM 14801 / SPH-1).